We begin with the raw amino-acid sequence, 247 residues long: 2,3-bisphosphoglycerate-dependent phosphoglycerate mutase (247 aa).

Substrate-binding positions include 8 to 15 (RHGESTWN), 21 to 22 (TG), Arg60, 87 to 90 (ERHY), Lys98, 114 to 115 (RR), and 183 to 184 (GN). Catalysis depends on His9, which acts as the Tele-phosphohistidine intermediate. The active-site Proton donor/acceptor is the Glu87.

Belongs to the phosphoglycerate mutase family. BPG-dependent PGAM subfamily. In terms of assembly, homodimer.

It catalyses the reaction (2R)-2-phosphoglycerate = (2R)-3-phosphoglycerate. It participates in carbohydrate degradation; glycolysis; pyruvate from D-glyceraldehyde 3-phosphate: step 3/5. Catalyzes the interconversion of 2-phosphoglycerate and 3-phosphoglycerate. The protein is 2,3-bisphosphoglycerate-dependent phosphoglycerate mutase of Methylibium petroleiphilum (strain ATCC BAA-1232 / LMG 22953 / PM1).